A 127-amino-acid chain; its full sequence is MAEITKADVVSFIENMTVLELSELVKELEEKFGVSAAAPVAVAAAAAPAAAAEAAEEKTEFDIILKSAGANKIGVIKVVRALTGLGLKEAKDLVDGAPKSVKTGVSKEEAEDAKKQLVESGAEVEIK.

A disordered region spans residues 101–127 (VKTGVSKEEAEDAKKQLVESGAEVEIK). Over residues 105 to 117 (VSKEEAEDAKKQL) the composition is skewed to basic and acidic residues.

This sequence belongs to the bacterial ribosomal protein bL12 family. In terms of assembly, homodimer. Part of the ribosomal stalk of the 50S ribosomal subunit. Forms a multimeric L10(L12)X complex, where L10 forms an elongated spine to which 2 to 4 L12 dimers bind in a sequential fashion. Binds GTP-bound translation factors.

Forms part of the ribosomal stalk which helps the ribosome interact with GTP-bound translation factors. Is thus essential for accurate translation. The chain is Large ribosomal subunit protein bL12 from Geobacter metallireducens (strain ATCC 53774 / DSM 7210 / GS-15).